The following is a 147-amino-acid chain: Large ribosomal subunit protein bL9 (147 aa).

Belongs to the bacterial ribosomal protein bL9 family.

Its function is as follows. Binds to the 23S rRNA. The chain is Large ribosomal subunit protein bL9 from Campylobacter jejuni subsp. jejuni serotype O:6 (strain 81116 / NCTC 11828).